A 268-amino-acid polypeptide reads, in one-letter code: HTH-type transcriptional activator RhaS (268 aa).

The HTH araC/xylS-type domain occupies 171–268 (RQMIRWLENN…YSIAPRELRI (98 aa)). DNA-binding regions (H-T-H motif) lie at residues 188-209 (EELAEKFALPIRTLHRYIKSQT) and 236-259 (IINIAYDCGFNDSSYFSTCFKNEY).

Binds DNA as a dimer.

Its subcellular location is the cytoplasm. Functionally, activates expression of the rhaBAD and rhaT operons. This chain is HTH-type transcriptional activator RhaS, found in Mannheimia succiniciproducens (strain KCTC 0769BP / MBEL55E).